The chain runs to 1342 residues: DNA-directed RNA polymerase subunit beta (1342 aa).

The protein belongs to the RNA polymerase beta chain family. As to quaternary structure, the RNAP catalytic core consists of 2 alpha, 1 beta, 1 beta' and 1 omega subunit. When a sigma factor is associated with the core the holoenzyme is formed, which can initiate transcription.

It catalyses the reaction RNA(n) + a ribonucleoside 5'-triphosphate = RNA(n+1) + diphosphate. Functionally, DNA-dependent RNA polymerase catalyzes the transcription of DNA into RNA using the four ribonucleoside triphosphates as substrates. The sequence is that of DNA-directed RNA polymerase subunit beta from Pectobacterium atrosepticum (strain SCRI 1043 / ATCC BAA-672) (Erwinia carotovora subsp. atroseptica).